Here is a 220-residue protein sequence, read N- to C-terminus: Deoxyribose-phosphate aldolase (220 aa).

Asp89 serves as the catalytic Proton donor/acceptor. Lys151 (schiff-base intermediate with acetaldehyde) is an active-site residue. Lys180 functions as the Proton donor/acceptor in the catalytic mechanism.

This sequence belongs to the DeoC/FbaB aldolase family. DeoC type 1 subfamily.

It is found in the cytoplasm. The catalysed reaction is 2-deoxy-D-ribose 5-phosphate = D-glyceraldehyde 3-phosphate + acetaldehyde. The protein operates within carbohydrate degradation; 2-deoxy-D-ribose 1-phosphate degradation; D-glyceraldehyde 3-phosphate and acetaldehyde from 2-deoxy-alpha-D-ribose 1-phosphate: step 2/2. Functionally, catalyzes a reversible aldol reaction between acetaldehyde and D-glyceraldehyde 3-phosphate to generate 2-deoxy-D-ribose 5-phosphate. The polypeptide is Deoxyribose-phosphate aldolase (Deinococcus radiodurans (strain ATCC 13939 / DSM 20539 / JCM 16871 / CCUG 27074 / LMG 4051 / NBRC 15346 / NCIMB 9279 / VKM B-1422 / R1)).